The following is a 376-amino-acid chain: N-acetyldiaminopimelate deacetylase (376 aa).

The active site involves aspartate 69. Glutamate 128 acts as the Proton acceptor in catalysis.

It belongs to the peptidase M20A family. N-acetyldiaminopimelate deacetylase subfamily.

It carries out the reaction N-acetyl-(2S,6S)-2,6-diaminopimelate + H2O = (2S,6S)-2,6-diaminopimelate + acetate. It participates in amino-acid biosynthesis; L-lysine biosynthesis via DAP pathway; LL-2,6-diaminopimelate from (S)-tetrahydrodipicolinate (acetylase route): step 3/3. In terms of biological role, catalyzes the conversion of N-acetyl-diaminopimelate to diaminopimelate and acetate. The chain is N-acetyldiaminopimelate deacetylase from Streptococcus uberis (strain ATCC BAA-854 / 0140J).